Reading from the N-terminus, the 271-residue chain is Phosphatidylinositol transfer protein alpha isoform (271 aa).

A 1,2-diacyl-sn-glycero-3-phospho-(1D-myo-inositol) contacts are provided by threonine 59, lysine 61, glutamate 86, asparagine 90, threonine 97, and lysine 195. Lysine 216 is subject to N6-acetyllysine. Residues 251 to 264 (TKRQLDEMRQKDPV) show a composition bias toward basic and acidic residues. The tract at residues 251 to 271 (TKRQLDEMRQKDPVKGMTADD) is disordered.

The protein belongs to the PtdIns transfer protein family. PI transfer class I subfamily. Post-translationally, phosphorylated by PKC in a calcium and phosphatidylserine-dependent manner. In terms of tissue distribution, expressed in a wide range of tissues.

Its subcellular location is the cytoplasm. It localises to the nucleus. The enzyme catalyses a 1,2-diacyl-sn-glycero-3-phosphocholine(in) = a 1,2-diacyl-sn-glycero-3-phosphocholine(out). It catalyses the reaction a 1,2-diacyl-sn-glycero-3-phospho-(1D-myo-inositol)(in) = a 1,2-diacyl-sn-glycero-3-phospho-(1D-myo-inositol)(out). Phosphatidylinositol transfer activity is inhibited by N-ethylmaleimide. Catalyzes the transfer of phosphatidylinositol (PI) and phosphatidylcholine (PC) between membranes. Shows a preference for PI and PC containing shorter saturated or monosaturated acyl chains at the sn-1 and sn-2 positions. Preference order for PC is C16:1 &gt; C16:0 &gt; C18:1 &gt; C18:0 &gt; C20:4 and for PI is C16:1 &gt; C16:0 &gt; C18:1 &gt; C18:0 &gt; C20:4 &gt; C20:3. This chain is Phosphatidylinositol transfer protein alpha isoform (Pitpna), found in Rattus norvegicus (Rat).